The sequence spans 558 residues: Putative transposase for insertion sequence IS1162 (558 aa).

One can recognise an HTH IS408-type domain in the interval Ile11–Leu93. A DNA-binding region (H-T-H motif) is located at residues Leu23–Thr44. The 198-residue stretch at Gln139–Arg336 folds into the Integrase catalytic domain. A disordered region spans residues Gln486–Arg558.

It belongs to the transposase IS21/IS408/IS1162 family.

Its function is as follows. Required for the transposition of the insertion element. This chain is Putative transposase for insertion sequence IS1162, found in Pseudomonas fluorescens.